The sequence spans 275 residues: NH(3)-dependent NAD(+) synthetase (275 aa).

50–57 (GISGGVDS) is an ATP binding site. Mg(2+) is bound at residue Asp-56. Arg-147 is a binding site for deamido-NAD(+). ATP is bound at residue Thr-167. Residue Glu-172 participates in Mg(2+) binding. Residues Lys-180 and Asp-187 each coordinate deamido-NAD(+). ATP-binding residues include Lys-196 and Thr-218. 267-268 (HK) provides a ligand contact to deamido-NAD(+).

The protein belongs to the NAD synthetase family. In terms of assembly, homodimer.

The catalysed reaction is deamido-NAD(+) + NH4(+) + ATP = AMP + diphosphate + NAD(+) + H(+). The protein operates within cofactor biosynthesis; NAD(+) biosynthesis; NAD(+) from deamido-NAD(+) (ammonia route): step 1/1. Functionally, catalyzes the ATP-dependent amidation of deamido-NAD to form NAD. Uses ammonia as a nitrogen source. This Pseudomonas putida (strain ATCC 47054 / DSM 6125 / CFBP 8728 / NCIMB 11950 / KT2440) protein is NH(3)-dependent NAD(+) synthetase.